The primary structure comprises 464 residues: Glutamate--tRNA ligase 1 (464 aa).

The short motif at 8 to 18 is the 'HIGH' region element; sequence PSPTGHLHVGG. The 'KMSKS' region motif lies at 231 to 235; it reads PLSKR. Lys-234 is a binding site for ATP.

It belongs to the class-I aminoacyl-tRNA synthetase family. Glutamate--tRNA ligase type 1 subfamily. In terms of assembly, monomer.

It is found in the cytoplasm. The catalysed reaction is tRNA(Glu) + L-glutamate + ATP = L-glutamyl-tRNA(Glu) + AMP + diphosphate. Catalyzes the attachment of glutamate to tRNA(Glu) in a two-step reaction: glutamate is first activated by ATP to form Glu-AMP and then transferred to the acceptor end of tRNA(Glu). The polypeptide is Glutamate--tRNA ligase 1 (Thermotoga petrophila (strain ATCC BAA-488 / DSM 13995 / JCM 10881 / RKU-1)).